Consider the following 121-residue polypeptide: uncharacterized protein (121 aa).

The HIT domain maps to 7–121; it reads IFCKIVRGEV…GGREMSWPPG (115 aa). The Histidine triad motif motif lies at 105–109; that stretch reads HLHLH.

This is an uncharacterized protein from Aquifex aeolicus (strain VF5).